The following is a 178-amino-acid chain: Transcriptional repressor NrdR (178 aa).

Residues 1–21 (MRCPFCGHEDTQVKDSRPHED) are disordered. Residues 3-34 (CPFCGHEDTQVKDSRPHEDGAAIRRRRICAAC) fold into a zinc finger. Over residues 7–21 (GHEDTQVKDSRPHED) the composition is skewed to basic and acidic residues. In terms of domain architecture, ATP-cone spans 49-139 (LYVVKADDRR…VHWDFRETKD (91 aa)).

This sequence belongs to the NrdR family. It depends on Zn(2+) as a cofactor.

Its function is as follows. Negatively regulates transcription of bacterial ribonucleotide reductase nrd genes and operons by binding to NrdR-boxes. The protein is Transcriptional repressor NrdR of Gluconacetobacter diazotrophicus (strain ATCC 49037 / DSM 5601 / CCUG 37298 / CIP 103539 / LMG 7603 / PAl5).